A 105-amino-acid chain; its full sequence is Urease subunit beta (105 aa).

The protein belongs to the urease beta subunit family. Heterotrimer of UreA (gamma), UreB (beta) and UreC (alpha) subunits. Three heterotrimers associate to form the active enzyme.

The protein localises to the cytoplasm. It carries out the reaction urea + 2 H2O + H(+) = hydrogencarbonate + 2 NH4(+). It participates in nitrogen metabolism; urea degradation; CO(2) and NH(3) from urea (urease route): step 1/1. The polypeptide is Urease subunit beta (Marinomonas sp. (strain MWYL1)).